The chain runs to 187 residues: Peptidyl-tRNA hydrolase (187 aa).

TRNA is bound at residue Tyr16. The active-site Proton acceptor is the His21. TRNA-binding residues include Tyr66, Asn68, and Asn114.

It belongs to the PTH family. As to quaternary structure, monomer.

The protein resides in the cytoplasm. The catalysed reaction is an N-acyl-L-alpha-aminoacyl-tRNA + H2O = an N-acyl-L-amino acid + a tRNA + H(+). Functionally, hydrolyzes ribosome-free peptidyl-tRNAs (with 1 or more amino acids incorporated), which drop off the ribosome during protein synthesis, or as a result of ribosome stalling. Catalyzes the release of premature peptidyl moieties from peptidyl-tRNA molecules trapped in stalled 50S ribosomal subunits, and thus maintains levels of free tRNAs and 50S ribosomes. This Malacoplasma penetrans (strain HF-2) (Mycoplasma penetrans) protein is Peptidyl-tRNA hydrolase.